The sequence spans 1158 residues: ATP-dependent helicase/deoxyribonuclease subunit B (1158 aa).

The protein belongs to the helicase family. AddB/RexB type 2 subfamily. In terms of assembly, heterodimer of AddA and RexB. Mg(2+) serves as cofactor.

Functionally, the heterodimer acts as both an ATP-dependent DNA helicase and an ATP-dependent, dual-direction single-stranded exonuclease. Recognizes the chi site generating a DNA molecule suitable for the initiation of homologous recombination. This subunit has 5' -&gt; 3' nuclease activity but not helicase activity. The sequence is that of ATP-dependent helicase/deoxyribonuclease subunit B from Lactobacillus gasseri (strain ATCC 33323 / DSM 20243 / BCRC 14619 / CIP 102991 / JCM 1131 / KCTC 3163 / NCIMB 11718 / NCTC 13722 / AM63).